Here is a 396-residue protein sequence, read N- to C-terminus: Argininosuccinate synthase (396 aa).

Residues 10–18 (AYSGGLDTS) and Ala37 contribute to the ATP site. Tyr88 and Ser93 together coordinate L-citrulline. Gly118 contacts ATP. Residues Thr120, Asn124, and Asp125 each coordinate L-aspartate. Asn124 contributes to the L-citrulline binding site. Positions 128, 176, 185, 261, and 273 each coordinate L-citrulline.

This sequence belongs to the argininosuccinate synthase family. Type 1 subfamily. As to quaternary structure, homotetramer.

It localises to the cytoplasm. It carries out the reaction L-citrulline + L-aspartate + ATP = 2-(N(omega)-L-arginino)succinate + AMP + diphosphate + H(+). Its pathway is amino-acid biosynthesis; L-arginine biosynthesis; L-arginine from L-ornithine and carbamoyl phosphate: step 2/3. The sequence is that of Argininosuccinate synthase from Nitratidesulfovibrio vulgaris (strain DP4) (Desulfovibrio vulgaris).